The following is a 249-amino-acid chain: INO80 complex subunit 1 (249 aa).

2 consecutive C2H2-type zinc fingers follow at residues 73 to 100 (YTCEWDDCPRKGMVQTSRFALVAHLRSH) and 106 to 131 (FICSVPECDRSFTRSDALAKHMRTVH).

As to quaternary structure, component of the INO80 chromatin remodeling complex.

The protein resides in the nucleus. It is found in the cytoplasm. Its function is as follows. Component of the INO80 complex which remodels chromatin by shifting nucleosomes and is involved in DNA repair. The protein is INO80 complex subunit 1 (iec1) of Schizosaccharomyces pombe (strain 972 / ATCC 24843) (Fission yeast).